The following is a 332-amino-acid chain: Glycerol-3-phosphate dehydrogenase [NAD(P)+] (332 aa).

Residues Ser-11, Phe-12, Lys-32, and Lys-106 each contribute to the NADPH site. Lys-106, Gly-137, and Ser-139 together coordinate sn-glycerol 3-phosphate. NADPH is bound at residue Ala-141. Positions 192, 245, 255, 256, and 257 each coordinate sn-glycerol 3-phosphate. Lys-192 acts as the Proton acceptor in catalysis. Position 256 (Arg-256) interacts with NADPH. NADPH contacts are provided by Val-280 and Glu-282.

It belongs to the NAD-dependent glycerol-3-phosphate dehydrogenase family.

It localises to the cytoplasm. The catalysed reaction is sn-glycerol 3-phosphate + NAD(+) = dihydroxyacetone phosphate + NADH + H(+). It catalyses the reaction sn-glycerol 3-phosphate + NADP(+) = dihydroxyacetone phosphate + NADPH + H(+). It functions in the pathway membrane lipid metabolism; glycerophospholipid metabolism. Catalyzes the reduction of the glycolytic intermediate dihydroxyacetone phosphate (DHAP) to sn-glycerol 3-phosphate (G3P), the key precursor for phospholipid synthesis. This chain is Glycerol-3-phosphate dehydrogenase [NAD(P)+], found in Staphylococcus epidermidis (strain ATCC 35984 / DSM 28319 / BCRC 17069 / CCUG 31568 / BM 3577 / RP62A).